The chain runs to 387 residues: Succinate--CoA ligase [ADP-forming] subunit beta (387 aa).

An ATP-grasp domain is found at 9–236 (KELFAKHNVP…KDATDPLELK (228 aa)). ATP-binding positions include Lys45, 52–54 (GRG), Ser94, and Glu99. Mg(2+)-binding residues include Asn191 and Asp205. Substrate-binding positions include Asn256 and 318 to 320 (GIT).

It belongs to the succinate/malate CoA ligase beta subunit family. As to quaternary structure, heterotetramer of two alpha and two beta subunits. It depends on Mg(2+) as a cofactor.

It carries out the reaction succinate + ATP + CoA = succinyl-CoA + ADP + phosphate. It catalyses the reaction GTP + succinate + CoA = succinyl-CoA + GDP + phosphate. The protein operates within carbohydrate metabolism; tricarboxylic acid cycle; succinate from succinyl-CoA (ligase route): step 1/1. Its function is as follows. Succinyl-CoA synthetase functions in the citric acid cycle (TCA), coupling the hydrolysis of succinyl-CoA to the synthesis of either ATP or GTP and thus represents the only step of substrate-level phosphorylation in the TCA. The beta subunit provides nucleotide specificity of the enzyme and binds the substrate succinate, while the binding sites for coenzyme A and phosphate are found in the alpha subunit. This is Succinate--CoA ligase [ADP-forming] subunit beta from Mycolicibacterium vanbaalenii (strain DSM 7251 / JCM 13017 / BCRC 16820 / KCTC 9966 / NRRL B-24157 / PYR-1) (Mycobacterium vanbaalenii).